Reading from the N-terminus, the 564-residue chain is Type 2 DNA topoisomerase 6 subunit B (564 aa).

Residues asparagine 46, aspartate 78, 99–100 (TK), 109–116 (GQQGIGIS), and lysine 471 each bind ATP.

The protein belongs to the TOP6B family. As to quaternary structure, homodimer. Heterotetramer of two Top6A and two Top6B chains.

It carries out the reaction ATP-dependent breakage, passage and rejoining of double-stranded DNA.. In terms of biological role, relaxes both positive and negative superturns and exhibits a strong decatenase activity. In Pyrococcus abyssi (strain GE5 / Orsay), this protein is Type 2 DNA topoisomerase 6 subunit B.